The sequence spans 229 residues: Putative N-acetylmannosamine-6-phosphate 2-epimerase (229 aa).

This sequence belongs to the NanE family.

It catalyses the reaction an N-acyl-D-glucosamine 6-phosphate = an N-acyl-D-mannosamine 6-phosphate. It participates in amino-sugar metabolism; N-acetylneuraminate degradation; D-fructose 6-phosphate from N-acetylneuraminate: step 3/5. In terms of biological role, converts N-acetylmannosamine-6-phosphate (ManNAc-6-P) to N-acetylglucosamine-6-phosphate (GlcNAc-6-P). The polypeptide is Putative N-acetylmannosamine-6-phosphate 2-epimerase (Escherichia fergusonii (strain ATCC 35469 / DSM 13698 / CCUG 18766 / IAM 14443 / JCM 21226 / LMG 7866 / NBRC 102419 / NCTC 12128 / CDC 0568-73)).